The following is a 338-amino-acid chain: Phenylalanine--tRNA ligase alpha subunit (338 aa).

Mg(2+) is bound at residue glutamate 252.

It belongs to the class-II aminoacyl-tRNA synthetase family. Phe-tRNA synthetase alpha subunit type 1 subfamily. Tetramer of two alpha and two beta subunits. Requires Mg(2+) as cofactor.

Its subcellular location is the cytoplasm. It carries out the reaction tRNA(Phe) + L-phenylalanine + ATP = L-phenylalanyl-tRNA(Phe) + AMP + diphosphate + H(+). This is Phenylalanine--tRNA ligase alpha subunit from Pseudomonas fluorescens (strain Pf0-1).